A 119-amino-acid polypeptide reads, in one-letter code: Large ribosomal subunit protein bL20c (119 aa).

Belongs to the bacterial ribosomal protein bL20 family.

It localises to the plastid. Its subcellular location is the chloroplast. Its function is as follows. Binds directly to 23S ribosomal RNA and is necessary for the in vitro assembly process of the 50S ribosomal subunit. It is not involved in the protein synthesizing functions of that subunit. This chain is Large ribosomal subunit protein bL20c, found in Lolium perenne (Perennial ryegrass).